The sequence spans 325 residues: Large ribosomal subunit protein uL18 (325 aa).

A disordered region spans residues 247–300; that stretch reads IRIPPSRRNPRRRSPRSGGRWPSCRSPPARRRSRSTRPTSWPRSRPTSKPKRPR. Low complexity-rich tracts occupy residues 262 to 273 and 282 to 291; these read RSGGRWPSCRSP and TRPTSWPRSR.

The protein belongs to the universal ribosomal protein uL18 family. Component of the large ribosomal subunit (LSU).

The protein resides in the cytoplasm. Its subcellular location is the nucleus. In terms of biological role, component of the ribosome, a large ribonucleoprotein complex responsible for the synthesis of proteins in the cell. The small ribosomal subunit (SSU) binds messenger RNAs (mRNAs) and translates the encoded message by selecting cognate aminoacyl-transfer RNA (tRNA) molecules. The large subunit (LSU) contains the ribosomal catalytic site termed the peptidyl transferase center (PTC), which catalyzes the formation of peptide bonds, thereby polymerizing the amino acids delivered by tRNAs into a polypeptide chain. The nascent polypeptides leave the ribosome through a tunnel in the LSU and interact with protein factors that function in enzymatic processing, targeting, and the membrane insertion of nascent chains at the exit of the ribosomal tunnel. This is Large ribosomal subunit protein uL18 (RpL5) from Anopheles gambiae (African malaria mosquito).